Consider the following 301-residue polypeptide: Ribosomal RNA small subunit methyltransferase H (301 aa).

S-adenosyl-L-methionine-binding positions include 35-37 (GGH), aspartate 55, phenylalanine 84, aspartate 105, and glutamine 112.

This sequence belongs to the methyltransferase superfamily. RsmH family.

It localises to the cytoplasm. The catalysed reaction is cytidine(1402) in 16S rRNA + S-adenosyl-L-methionine = N(4)-methylcytidine(1402) in 16S rRNA + S-adenosyl-L-homocysteine + H(+). Specifically methylates the N4 position of cytidine in position 1402 (C1402) of 16S rRNA. The sequence is that of Ribosomal RNA small subunit methyltransferase H from Chloroflexus aurantiacus (strain ATCC 29366 / DSM 635 / J-10-fl).